Here is a 399-residue protein sequence, read N- to C-terminus: Tryptophan synthase beta chain (399 aa).

At lysine 90 the chain carries N6-(pyridoxal phosphate)lysine.

Belongs to the TrpB family. As to quaternary structure, tetramer of two alpha and two beta chains. Pyridoxal 5'-phosphate is required as a cofactor.

It catalyses the reaction (1S,2R)-1-C-(indol-3-yl)glycerol 3-phosphate + L-serine = D-glyceraldehyde 3-phosphate + L-tryptophan + H2O. Its pathway is amino-acid biosynthesis; L-tryptophan biosynthesis; L-tryptophan from chorismate: step 5/5. The beta subunit is responsible for the synthesis of L-tryptophan from indole and L-serine. This Phocaeicola vulgatus (strain ATCC 8482 / DSM 1447 / JCM 5826 / CCUG 4940 / NBRC 14291 / NCTC 11154) (Bacteroides vulgatus) protein is Tryptophan synthase beta chain.